The following is a 211-amino-acid chain: FMN-dependent NADH:quinone oxidoreductase 2 (211 aa).

17 to 19 (SYS) lines the FMN pocket.

It belongs to the azoreductase type 1 family. As to quaternary structure, homodimer. Requires FMN as cofactor.

It catalyses the reaction 2 a quinone + NADH + H(+) = 2 a 1,4-benzosemiquinone + NAD(+). The catalysed reaction is N,N-dimethyl-1,4-phenylenediamine + anthranilate + 2 NAD(+) = 2-(4-dimethylaminophenyl)diazenylbenzoate + 2 NADH + 2 H(+). With respect to regulation, strongly inhibited by Pb(2+) and weakly inhibited by Cu(2+), Hg(2+) and Fe(2+). Stable in presence of Ag(+). In terms of biological role, quinone reductase that provides resistance to thiol-specific stress caused by electrophilic quinones. Contributes to resistance to 2-methylhydroquinone (2-MHQ) and catechol. Exhibits NADH-dependent 2,6-dichloroindophenol (DCIP) oxidoreductase activity. Its function is as follows. Also exhibits azoreductase activity. Catalyzes the reductive cleavage of the azo bond in aromatic azo compounds to the corresponding amines. Can reduce methyl red. This chain is FMN-dependent NADH:quinone oxidoreductase 2, found in Bacillus subtilis (strain 168).